Reading from the N-terminus, the 93-residue chain is Small ribosomal subunit protein uS19 (93 aa).

This sequence belongs to the universal ribosomal protein uS19 family.

In terms of biological role, protein S19 forms a complex with S13 that binds strongly to the 16S ribosomal RNA. This chain is Small ribosomal subunit protein uS19, found in Parafrankia sp. (strain EAN1pec).